The primary structure comprises 722 residues: Phenylalanine ammonia-lyase lenB (722 aa).

Tyrosine 83 (proton donor/acceptor) is an active-site residue. The segment at 117–136 is disordered; sequence LPTDRSSSRPSSRYPHGLRS. Residues 190–192 constitute a cross-link (5-imidazolinone (Ala-Gly)); that stretch reads ASG. 2,3-didehydroalanine (Ser) is present on serine 191. (E)-cinnamate is bound by residues asparagine 247, glutamine 334, arginine 340, asparagine 370, lysine 441, glutamate 469, and asparagine 472.

The protein belongs to the PAL/histidase family. Post-translationally, contains an active site 4-methylidene-imidazol-5-one (MIO), which is formed autocatalytically by cyclization and dehydration of residues Ala-Ser-Gly.

It carries out the reaction L-phenylalanine = (E)-cinnamate + NH4(+). It functions in the pathway alkaloid biosynthesis. Phenylalanine ammonia-lyase; part of the gene cluster that mediates the biosynthesis of the ergot alkaloids lentopeptins A and B. Within the pathway, lenB provides the cinnamic acid starter unit for the synthesis of the N-acyldiketopiperazine intermediate by the NRPS lenA. Cinnamic acid is condensed with the Ala-Val-Ala peptide chain by lenA which leads to the N-acyldiketopiperazine intermediate which in turn is converted into lentopeptins A and B by the cytochrome P450 monooxygenase lenC. The chain is Phenylalanine ammonia-lyase lenB from Aspergillus lentulus.